The primary structure comprises 274 residues: Cytochrome b-c1 complex subunit Rieske, mitochondrial (274 aa).

The Mitochondrial matrix segment spans residues 79 to 103; that stretch reads SHTDVKVPDFSEYRRLEVLDSTKSS. A helical membrane pass occupies residues 104 to 140; that stretch reads RESSEARKGFSYLVTGVTTVGVAYAAKNAVTQFVSSM. At 141–274 the chain is on the mitochondrial intermembrane side; that stretch reads SASADVLALA…FTSDDMVIVG (134 aa). In terms of domain architecture, Rieske spans 187–272; it reads EAAVELSQLR…YEFTSDDMVI (86 aa). [2Fe-2S] cluster contacts are provided by Cys217, His219, Cys236, His239, and Ser241. An intrachain disulfide couples Cys222 to Cys238.

The protein belongs to the Rieske iron-sulfur protein family. In terms of assembly, component of the ubiquinol-cytochrome c oxidoreductase (cytochrome b-c1 complex, complex III, CIII), a multisubunit enzyme composed of 11 subunits. The complex is composed of 3 respiratory subunits cytochrome b, cytochrome c1 and Rieske protein UQCRFS1, 2 core protein subunits UQCRC1/QCR1 and UQCRC2/QCR2, and 6 low-molecular weight protein subunits UQCRH/QCR6, UQCRB/QCR7, UQCRQ/QCR8, UQCR10/QCR9, UQCR11/QCR10 and subunit 9, the cleavage product of Rieske protein UQCRFS1. The complex exists as an obligatory dimer and forms supercomplexes (SCs) in the inner mitochondrial membrane with NADH-ubiquinone oxidoreductase (complex I, CI) and cytochrome c oxidase (complex IV, CIV), resulting in different assemblies (supercomplex SCI(1)III(2)IV(1) and megacomplex MCI(2)III(2)IV(2)). Incorporation of the Rieske protein UQCRFS1 is the penultimate step in complex III assembly. Interacts with TTC19, which is involved in the clearance of UQCRFS1 fragments. As to quaternary structure, component of the ubiquinol-cytochrome c oxidoreductase (cytochrome b-c1 complex, complex III, CIII). Subunit 9 corresponds to the mitochondrial targeting sequence (MTS) of Rieske protein UQCRFS1. It is retained after processing and incorporated inside complex III, where it remains bound to the complex and localizes between the 2 core subunits UQCRC1/QCR1 and UQCRC2/QCR2. Requires [2Fe-2S] cluster as cofactor. Proteolytic processing is necessary for the correct insertion of UQCRFS1 in the complex III dimer. Several fragments are generated during UQCRFS1 insertion, most probably due to the endogenous matrix-processing peptidase (MPP) activity of the 2 core protein subunits UQCRC1/QCR1 and UQCRC2/QCR2, which are homologous to the 2 mitochondrial-processing peptidase (MPP) subunits beta-MPP and alpha-MPP respectively. The action of the protease is also necessary for the clearance of the UQCRFS1 fragments.

Its subcellular location is the mitochondrion inner membrane. The enzyme catalyses a quinol + 2 Fe(III)-[cytochrome c](out) = a quinone + 2 Fe(II)-[cytochrome c](out) + 2 H(+)(out). Functionally, component of the ubiquinol-cytochrome c oxidoreductase, a multisubunit transmembrane complex that is part of the mitochondrial electron transport chain which drives oxidative phosphorylation. The respiratory chain contains 3 multisubunit complexes succinate dehydrogenase (complex II, CII), ubiquinol-cytochrome c oxidoreductase (cytochrome b-c1 complex, complex III, CIII) and cytochrome c oxidase (complex IV, CIV), that cooperate to transfer electrons derived from NADH and succinate to molecular oxygen, creating an electrochemical gradient over the inner membrane that drives transmembrane transport and the ATP synthase. The cytochrome b-c1 complex catalyzes electron transfer from ubiquinol to cytochrome c, linking this redox reaction to translocation of protons across the mitochondrial inner membrane, with protons being carried across the membrane as hydrogens on the quinol. In the process called Q cycle, 2 protons are consumed from the matrix, 4 protons are released into the intermembrane space and 2 electrons are passed to cytochrome c. The Rieske protein is a catalytic core subunit containing a [2Fe-2S] iron-sulfur cluster. It cycles between 2 conformational states during catalysis to transfer electrons from the quinol bound in the Q(0) site in cytochrome b to cytochrome c1. Incorporation of UQCRFS1 is the penultimate step in complex III assembly. Component of the ubiquinol-cytochrome c oxidoreductase (cytochrome b-c1 complex, complex III, CIII). UQCRFS1 undergoes proteolytic processing once it is incorporated in the complex III dimer. One of the fragments, called subunit 9, corresponds to its mitochondrial targeting sequence (MTS). The proteolytic processing is necessary for the correct insertion of UQCRFS1 in the complex III dimer, but the persistence of UQCRFS1-derived fragments may prevent newly imported UQCRFS1 to be processed and assembled into complex III and is detrimental for the complex III structure and function. This chain is Cytochrome b-c1 complex subunit Rieske, mitochondrial (UQCRFS1), found in Pan paniscus (Pygmy chimpanzee).